A 475-amino-acid chain; its full sequence is Ribulose bisphosphate carboxylase large chain (475 aa).

Positions M1–S2 are excised as a propeptide. The residue at position 3 (P3) is an N-acetylproline. The residue at position 14 (K14) is an N6,N6,N6-trimethyllysine. Residues N123 and T173 each contribute to the substrate site. K175 functions as the Proton acceptor in the catalytic mechanism. K177 lines the substrate pocket. The Mg(2+) site is built by K201, D203, and E204. K201 carries the post-translational modification N6-carboxylysine. Residue H294 is the Proton acceptor of the active site. Positions 295, 327, and 379 each coordinate substrate.

The protein belongs to the RuBisCO large chain family. Type I subfamily. Heterohexadecamer of 8 large chains and 8 small chains; disulfide-linked. The disulfide link is formed within the large subunit homodimers. Mg(2+) serves as cofactor. The disulfide bond which can form in the large chain dimeric partners within the hexadecamer appears to be associated with oxidative stress and protein turnover.

The protein resides in the plastid. It is found in the chloroplast. The enzyme catalyses 2 (2R)-3-phosphoglycerate + 2 H(+) = D-ribulose 1,5-bisphosphate + CO2 + H2O. It carries out the reaction D-ribulose 1,5-bisphosphate + O2 = 2-phosphoglycolate + (2R)-3-phosphoglycerate + 2 H(+). In terms of biological role, ruBisCO catalyzes two reactions: the carboxylation of D-ribulose 1,5-bisphosphate, the primary event in carbon dioxide fixation, as well as the oxidative fragmentation of the pentose substrate in the photorespiration process. Both reactions occur simultaneously and in competition at the same active site. The chain is Ribulose bisphosphate carboxylase large chain from Equisetum arvense (Field horsetail).